Reading from the N-terminus, the 253-residue chain is Phosphate import ATP-binding protein PstB (253 aa).

The ABC transporter domain maps to 8–248 (IQVRDLDLFY…PRDKRTEDYI (241 aa)). Position 40–47 (40–47 (GPSGCGKS)) interacts with ATP.

Belongs to the ABC transporter superfamily. Phosphate importer (TC 3.A.1.7) family. In terms of assembly, the complex is composed of two ATP-binding proteins (PstB), two transmembrane proteins (PstC and PstA) and a solute-binding protein (PstS).

It is found in the cell membrane. The enzyme catalyses phosphate(out) + ATP + H2O = ADP + 2 phosphate(in) + H(+). Part of the ABC transporter complex PstSACB involved in phosphate import. Responsible for energy coupling to the transport system. The polypeptide is Phosphate import ATP-binding protein PstB (Clostridium perfringens (strain ATCC 13124 / DSM 756 / JCM 1290 / NCIMB 6125 / NCTC 8237 / Type A)).